We begin with the raw amino-acid sequence, 274 residues long: Diaminopimelate epimerase (274 aa).

Substrate is bound by residues Asn-11, Gln-44, and Asn-64. Cys-73 (proton donor) is an active-site residue. Substrate-binding positions include 74–75 (GN), Asn-157, Asn-190, and 208–209 (ER). Catalysis depends on Cys-217, which acts as the Proton acceptor. 218–219 (GS) contributes to the substrate binding site.

Belongs to the diaminopimelate epimerase family. Homodimer.

It localises to the cytoplasm. It catalyses the reaction (2S,6S)-2,6-diaminopimelate = meso-2,6-diaminopimelate. Its pathway is amino-acid biosynthesis; L-lysine biosynthesis via DAP pathway; DL-2,6-diaminopimelate from LL-2,6-diaminopimelate: step 1/1. Its function is as follows. Catalyzes the stereoinversion of LL-2,6-diaminopimelate (L,L-DAP) to meso-diaminopimelate (meso-DAP), a precursor of L-lysine and an essential component of the bacterial peptidoglycan. This chain is Diaminopimelate epimerase, found in Shigella boydii serotype 18 (strain CDC 3083-94 / BS512).